We begin with the raw amino-acid sequence, 962 residues long: Integrator complex subunit 7 (962 aa).

Phosphoserine is present on residues Ser338 and Ser809.

The protein belongs to the Integrator subunit 7 family. In terms of assembly, component of the Integrator complex, composed of core subunits INTS1, INTS2, INTS3, INTS4, INTS5, INTS6, INTS7, INTS8, INTS9/RC74, INTS10, INTS11/CPSF3L, INTS12, INTS13, INTS14 and INTS15. The core complex associates with protein phosphatase 2A subunits PPP2CA and PPP2R1A, to form the Integrator-PP2A (INTAC) complex. Interacts with NABP2.

Its subcellular location is the nucleus. It localises to the chromosome. The protein localises to the cytoplasm. Component of the integrator complex, a multiprotein complex that terminates RNA polymerase II (Pol II) transcription in the promoter-proximal region of genes. The integrator complex provides a quality checkpoint during transcription elongation by driving premature transcription termination of transcripts that are unfavorably configured for transcriptional elongation: the complex terminates transcription by (1) catalyzing dephosphorylation of the C-terminal domain (CTD) of Pol II subunit POLR2A/RPB1 and SUPT5H/SPT5, (2) degrading the exiting nascent RNA transcript via endonuclease activity and (3) promoting the release of Pol II from bound DNA. The integrator complex is also involved in terminating the synthesis of non-coding Pol II transcripts, such as enhancer RNAs (eRNAs), small nuclear RNAs (snRNAs), telomerase RNAs and long non-coding RNAs (lncRNAs). May be not involved in the recruitment of cytoplasmic dynein to the nuclear envelope by different components of the INT complex. Plays a role in DNA damage response (DDR) signaling during the S phase. The chain is Integrator complex subunit 7 from Homo sapiens (Human).